Reading from the N-terminus, the 91-residue chain is Cell division topological specificity factor (91 aa).

Belongs to the MinE family.

In terms of biological role, prevents the cell division inhibition by proteins MinC and MinD at internal division sites while permitting inhibition at polar sites. This ensures cell division at the proper site by restricting the formation of a division septum at the midpoint of the long axis of the cell. The sequence is that of Cell division topological specificity factor from Gloeobacter violaceus (strain ATCC 29082 / PCC 7421).